Consider the following 360-residue polypeptide: DNA replication and repair protein RecF (360 aa).

ATP is bound at residue 30–37; it reads GVNGAGKT.

Belongs to the RecF family.

Its subcellular location is the cytoplasm. In terms of biological role, the RecF protein is involved in DNA metabolism; it is required for DNA replication and normal SOS inducibility. RecF binds preferentially to single-stranded, linear DNA. It also seems to bind ATP. The protein is DNA replication and repair protein RecF of Thioalkalivibrio sulfidiphilus (strain HL-EbGR7).